Here is a 300-residue protein sequence, read N- to C-terminus: tRNA pseudouridine synthase B (300 aa).

Asp-38 acts as the Nucleophile in catalysis.

This sequence belongs to the pseudouridine synthase TruB family. Type 1 subfamily.

The enzyme catalyses uridine(55) in tRNA = pseudouridine(55) in tRNA. In terms of biological role, responsible for synthesis of pseudouridine from uracil-55 in the psi GC loop of transfer RNAs. In Dehalococcoides mccartyi (strain CBDB1), this protein is tRNA pseudouridine synthase B.